We begin with the raw amino-acid sequence, 234 residues long: ATP synthase subunit a 2 (234 aa).

The next 5 helical transmembrane spans lie at Ala20–Thr40, Tyr78–Ile98, Ser107–Val127, Val169–Val189, and Leu194–Ile214.

The protein belongs to the ATPase A chain family. F-type ATPases have 2 components, CF(1) - the catalytic core - and CF(0) - the membrane proton channel. CF(1) has five subunits: alpha(3), beta(3), gamma(1), delta(1), epsilon(1). CF(0) has four main subunits: a, b, b' and c.

The protein localises to the cellular thylakoid membrane. Its function is as follows. Key component of the proton channel; it plays a direct role in the translocation of protons across the membrane. This Acaryochloris marina (strain MBIC 11017) protein is ATP synthase subunit a 2.